A 250-amino-acid chain; its full sequence is Putative beta-carotene-binding protein (250 aa).

In terms of tissue distribution, deposited in the epidermis and cuticle of male locusts during their sexual maturation.

Its function is as follows. Has beta-carotene-binding activity. May be involved in the transport of carotenes from internal tissues to epidermis and cuticle of the locust. The polypeptide is Putative beta-carotene-binding protein (Schistocerca gregaria (Desert locust)).